The primary structure comprises 737 residues: Protein kinase C epsilon type (737 aa).

A C2 domain is found at 1-117 (MVVFNGLLKI…NGSRHFEDWI (117 aa)). Serine 62 is subject to Phosphoserine. The Phorbol-ester/DAG-type 1 zinc-finger motif lies at 169–220 (GHKFMATYLRQPTYCSHCRDFIWGVIGKQGYQCQVCTCVVHKRCHELIITKC). The Interaction with actin motif lies at 223 to 228 (LKKQET). Threonine 228 carries the post-translational modification Phosphothreonine. The residue at position 234 (serine 234) is a Phosphoserine. Residues 242–292 (PHKFGIHNYKVPTFCDHCGSLLWGLLRQGLQCKVCKMNVHRRCETNVAPNC) form a Phorbol-ester/DAG-type 2 zinc finger. Threonine 309 carries the phosphothreonine modification. The tract at residues 310-356 (PDKITNSGQRRKKLAAGAESPQPASGNSPSEDDRSKSAPTSPCDQEL) is disordered. Phosphoserine is present on residues serine 316, serine 329, serine 337, and serine 346. Threonine 349 carries the phosphothreonine modification. Serine 350 bears the Phosphoserine; by MAPK11 and MAPK14 mark. Phosphoserine occurs at positions 368 and 388. The disordered stretch occupies residues 369 to 398 (FDNRGEEHRASSSTDGQLASPGENGEVRQG). Positions 408 to 668 (FNFIKVLGKG…EDAIKQHPFF (261 aa)) constitute a Protein kinase domain. ATP-binding positions include 414–422 (LGKGSFGKV) and lysine 437. Aspartate 532 functions as the Proton acceptor in the catalytic mechanism. Threonine 566 carries the post-translational modification Phosphothreonine; by PDPK1. One can recognise an AGC-kinase C-terminal domain in the interval 669-737 (KEIDWVLLEQ…FSYFGEDLMP (69 aa)). 2 positions are modified to phosphothreonine: threonine 703 and threonine 710. Serine 729 is subject to Phosphoserine.

It belongs to the protein kinase superfamily. AGC Ser/Thr protein kinase family. PKC subfamily. In terms of assembly, forms a ternary complex with TRIM63 and RACK1/GN2BL1. Can form a complex with PDLIM5 and N-type calcium channel. Interacts with COPB1. Interacts with DGKQ. Interacts with STAT3. Interacts with YWHAB. Interacts with HSP90AB1; promotes functional activation in a heat shock-dependent manner. Interacts (via phorbol-ester/DAG-type 2 domain) with PRPH and VIM. Interacts with NLRP5/MATER. In terms of processing, phosphorylation on Thr-566 by PDPK1 triggers autophosphorylation on Ser-729. Phosphorylation in the hinge domain at Ser-350 by MAPK11 or MAPK14, Ser-346 by GSK3B and Ser-368 by autophosphorylation is required for interaction with YWHAB. In response to growth factors, phosphorylated at Thr-703 and Ser-729 by the mTORC2 complex, promoting autophosphorylation and activation of PRKCE.

Its subcellular location is the cytoplasm. The protein resides in the cytoskeleton. It localises to the cell membrane. It is found in the perinuclear region. The protein localises to the nucleus. The enzyme catalyses L-seryl-[protein] + ATP = O-phospho-L-seryl-[protein] + ADP + H(+). It catalyses the reaction L-threonyl-[protein] + ATP = O-phospho-L-threonyl-[protein] + ADP + H(+). Its activity is regulated as follows. Novel PKCs (PRKCD, PRKCE, PRKCH and PRKCQ) are calcium-insensitive, but activated by diacylglycerol (DAG) and phosphatidylserine. Three specific sites; Thr-566 (activation loop of the kinase domain), Thr-710 (turn motif) and Ser-729 (hydrophobic region), need to be phosphorylated for its full activation. Functionally, calcium-independent, phospholipid- and diacylglycerol (DAG)-dependent serine/threonine-protein kinase that plays essential roles in the regulation of multiple cellular processes linked to cytoskeletal proteins, such as cell adhesion, motility, migration and cell cycle, functions in neuron growth and ion channel regulation, and is involved in immune response, cancer cell invasion and regulation of apoptosis. Mediates cell adhesion to the extracellular matrix via integrin-dependent signaling, by mediating angiotensin-2-induced activation of integrin beta-1 (ITGB1) in cardiac fibroblasts. Phosphorylates MARCKS, which phosphorylates and activates PTK2/FAK, leading to the spread of cardiomyocytes. Involved in the control of the directional transport of ITGB1 in mesenchymal cells by phosphorylating vimentin (VIM), an intermediate filament (IF) protein. In epithelial cells, associates with and phosphorylates keratin-8 (KRT8), which induces targeting of desmoplakin at desmosomes and regulates cell-cell contact. Phosphorylates IQGAP1, which binds to CDC42, mediating epithelial cell-cell detachment prior to migration. During cytokinesis, forms a complex with YWHAB, which is crucial for daughter cell separation, and facilitates abscission by a mechanism which may implicate the regulation of RHOA. In cardiac myocytes, regulates myofilament function and excitation coupling at the Z-lines, where it is indirectly associated with F-actin via interaction with COPB1. During endothelin-induced cardiomyocyte hypertrophy, mediates activation of PTK2/FAK, which is critical for cardiomyocyte survival and regulation of sarcomere length. Plays a role in the pathogenesis of dilated cardiomyopathy via persistent phosphorylation of troponin I (TNNI3). Involved in nerve growth factor (NFG)-induced neurite outgrowth and neuron morphological change independently of its kinase activity, by inhibition of RHOA pathway, activation of CDC42 and cytoskeletal rearrangement. May be involved in presynaptic facilitation by mediating phorbol ester-induced synaptic potentiation. Phosphorylates gamma-aminobutyric acid receptor subunit gamma-2 (GABRG2), which reduces the response of GABA receptors to ethanol and benzodiazepines and may mediate acute tolerance to the intoxicating effects of ethanol. Upon PMA treatment, phosphorylates the capsaicin- and heat-activated cation channel TRPV1, which is required for bradykinin-induced sensitization of the heat response in nociceptive neurons. Is able to form a complex with PDLIM5 and N-type calcium channel, and may enhance channel activities and potentiates fast synaptic transmission by phosphorylating the pore-forming alpha subunit CACNA1B (CaV2.2). Downstream of TLR4, plays an important role in the lipopolysaccharide (LPS)-induced immune response by phosphorylating and activating TICAM2/TRAM, which in turn activates the transcription factor IRF3 and subsequent cytokines production. In differentiating erythroid progenitors, is regulated by EPO and controls the protection against the TNFSF10/TRAIL-mediated apoptosis, via BCL2. May be involved in the regulation of the insulin-induced phosphorylation and activation of AKT1. Phosphorylates NLRP5/MATER and may thereby modulate AKT pathway activation in cumulus cells. Phosphorylates and activates LRRK1, which phosphorylates RAB proteins involved in intracellular trafficking. The sequence is that of Protein kinase C epsilon type (Prkce) from Rattus norvegicus (Rat).